A 135-amino-acid polypeptide reads, in one-letter code: ATP synthase epsilon chain (135 aa).

This sequence belongs to the ATPase epsilon chain family. In terms of assembly, F-type ATPases have 2 components, CF(1) - the catalytic core - and CF(0) - the membrane proton channel. CF(1) has five subunits: alpha(3), beta(3), gamma(1), delta(1), epsilon(1). CF(0) has three main subunits: a, b and c.

The protein resides in the cell inner membrane. Produces ATP from ADP in the presence of a proton gradient across the membrane. The chain is ATP synthase epsilon chain from Rhodopseudomonas palustris (strain BisB18).